The following is a 1072-amino-acid chain: DNA-directed RNA polymerase subunit beta (1072 aa).

Belongs to the RNA polymerase beta chain family. In terms of assembly, in plastids the minimal PEP RNA polymerase catalytic core is composed of four subunits: alpha, beta, beta', and beta''. When a (nuclear-encoded) sigma factor is associated with the core the holoenzyme is formed, which can initiate transcription.

The protein localises to the plastid. Its subcellular location is the chloroplast. The catalysed reaction is RNA(n) + a ribonucleoside 5'-triphosphate = RNA(n+1) + diphosphate. Its function is as follows. DNA-dependent RNA polymerase catalyzes the transcription of DNA into RNA using the four ribonucleoside triphosphates as substrates. The polypeptide is DNA-directed RNA polymerase subunit beta (Oenothera elata subsp. hookeri (Hooker's evening primrose)).